An 84-amino-acid chain; its full sequence is UPF0291 protein EUBELI_00985 (84 aa).

It belongs to the UPF0291 family.

The protein resides in the cytoplasm. The sequence is that of UPF0291 protein EUBELI_00985 from Lachnospira eligens (strain ATCC 27750 / DSM 3376 / VPI C15-48 / C15-B4) (Eubacterium eligens).